The following is a 139-amino-acid chain: Diacylglycerol acyltransferase/mycolyltransferase Ag85A (139 aa).

The active-site Nucleophile is the S10. The substrate site is built by S10 and D38. E114 is an active-site residue. Substrate-binding positions include 116–119 (FVRT) and K123.

It belongs to the mycobacterial A85 antigen family. Homodimer.

Its subcellular location is the secreted. It is found in the cell wall. The protein resides in the cytoplasm. It carries out the reaction an acyl-CoA + a 1,2-diacyl-sn-glycerol = a triacyl-sn-glycerol + CoA. It catalyses the reaction 2 alpha,alpha'-trehalose 6-mycolate = alpha,alpha'-trehalose 6,6'-bismycolate + alpha,alpha-trehalose. Functionally, the antigen 85 proteins (FbpA, FbpB, FbpC) are responsible for the high affinity of mycobacteria for fibronectin, a large adhesive glycoprotein, which facilitates the attachment of M.tuberculosis to murine alveolar macrophages (AMs). They also help to maintain the integrity of the cell wall by catalyzing the transfer of mycolic acids to cell wall arabinogalactan, and through the synthesis of alpha,alpha-trehalose dimycolate (TDM, cord factor). They catalyze the transfer of a mycoloyl residue from one molecule of alpha,alpha-trehalose monomycolate (TMM) to another TMM, leading to the formation of TDM. FbpA mediates triacylglycerol (TAG) formation with long-chain acyl-CoA as the acyl donor and 1,2-dipalmitoyl-sn-glycerol (1,2-dipalmitin) as the acyl acceptor. It has a preference for C26:0-CoA over C18:1-CoA. The protein is Diacylglycerol acyltransferase/mycolyltransferase Ag85A (fbpA) of Mycobacterium marinum.